Consider the following 250-residue polypeptide: Nuclear transcription factor Y subunit C-4 (250 aa).

Positions 219 to 250 (GIAYGGQQGHPGYLWQDPQEQQEEPPAEQQSD) are disordered. A compositionally biased stretch (acidic residues) spans 238–250 (EQQEEPPAEQQSD).

The protein belongs to the NFYC/HAP5 subunit family. As to quaternary structure, heterotrimeric transcription factor composed of three components, NF-YA, NF-YB and NF-YC. NF-YB and NF-YC must interact and dimerize for NF-YA association and DNA binding. Interacts with NFYB2. Interacts with NFYB8, NFYB10 and HD5/NFYB11.

Its subcellular location is the nucleus. The protein localises to the cytoplasm. In terms of biological role, probable transcription factor involved in the regulation of flowering time under long day (LD) conditions. Functions as a repressor of flowering, independently of HD1 and GHD7. Controls flowering time by negatively regulating the expression of EHD1 and HD3A. Component of the NF-Y/HAP transcription factor complex. This Oryza sativa subsp. japonica (Rice) protein is Nuclear transcription factor Y subunit C-4.